Reading from the N-terminus, the 101-residue chain is NADH-quinone oxidoreductase subunit K (101 aa).

A run of 3 helical transmembrane segments spans residues L4–L24, I30–F50, and F65–F85.

It belongs to the complex I subunit 4L family. NDH-1 is composed of 14 different subunits. Subunits NuoA, H, J, K, L, M, N constitute the membrane sector of the complex.

Its subcellular location is the cell inner membrane. It carries out the reaction a quinone + NADH + 5 H(+)(in) = a quinol + NAD(+) + 4 H(+)(out). NDH-1 shuttles electrons from NADH, via FMN and iron-sulfur (Fe-S) centers, to quinones in the respiratory chain. The immediate electron acceptor for the enzyme in this species is believed to be ubiquinone. Couples the redox reaction to proton translocation (for every two electrons transferred, four hydrogen ions are translocated across the cytoplasmic membrane), and thus conserves the redox energy in a proton gradient. This Ruegeria pomeroyi (strain ATCC 700808 / DSM 15171 / DSS-3) (Silicibacter pomeroyi) protein is NADH-quinone oxidoreductase subunit K.